Consider the following 244-residue polypeptide: 5-oxoprolinase subunit A (244 aa).

This sequence belongs to the LamB/PxpA family. Forms a complex composed of PxpA, PxpB and PxpC.

It carries out the reaction 5-oxo-L-proline + ATP + 2 H2O = L-glutamate + ADP + phosphate + H(+). Catalyzes the cleavage of 5-oxoproline to form L-glutamate coupled to the hydrolysis of ATP to ADP and inorganic phosphate. This is 5-oxoprolinase subunit A from Shigella sonnei (strain Ss046).